Consider the following 191-residue polypeptide: Elongation factor P (191 aa).

An N6-(3,6-diaminohexanoyl)-5-hydroxylysine modification is found at Lys-34.

Belongs to the elongation factor P family. In terms of processing, may be beta-lysylated on the epsilon-amino group of Lys-34 by the combined action of EpmA and EpmB, and then hydroxylated on the C5 position of the same residue by EpmC (if this protein is present). Lysylation is critical for the stimulatory effect of EF-P on peptide-bond formation. The lysylation moiety may extend toward the peptidyltransferase center and stabilize the terminal 3-CCA end of the tRNA. Hydroxylation of the C5 position on Lys-34 may allow additional potential stabilizing hydrogen-bond interactions with the P-tRNA.

The protein resides in the cytoplasm. The protein operates within protein biosynthesis; polypeptide chain elongation. Its function is as follows. Involved in peptide bond synthesis. Alleviates ribosome stalling that occurs when 3 or more consecutive Pro residues or the sequence PPG is present in a protein, possibly by augmenting the peptidyl transferase activity of the ribosome. Modification of Lys-34 is required for alleviation. This chain is Elongation factor P, found in Psychrobacter sp. (strain PRwf-1).